Here is a 341-residue protein sequence, read N- to C-terminus: tRNA N6-adenosine threonylcarbamoyltransferase (341 aa).

His111 and His115 together coordinate Fe cation. Residues 133–137, Asp166, Gly179, Asp183, and Asn271 contribute to the substrate site; that span reads VVSGG. Residue Asp299 coordinates Fe cation.

The protein belongs to the KAE1 / TsaD family. It depends on Fe(2+) as a cofactor.

Its subcellular location is the cytoplasm. It carries out the reaction L-threonylcarbamoyladenylate + adenosine(37) in tRNA = N(6)-L-threonylcarbamoyladenosine(37) in tRNA + AMP + H(+). Functionally, required for the formation of a threonylcarbamoyl group on adenosine at position 37 (t(6)A37) in tRNAs that read codons beginning with adenine. Is involved in the transfer of the threonylcarbamoyl moiety of threonylcarbamoyl-AMP (TC-AMP) to the N6 group of A37, together with TsaE and TsaB. TsaD likely plays a direct catalytic role in this reaction. The protein is tRNA N6-adenosine threonylcarbamoyltransferase of Fusobacterium nucleatum subsp. nucleatum (strain ATCC 25586 / DSM 15643 / BCRC 10681 / CIP 101130 / JCM 8532 / KCTC 2640 / LMG 13131 / VPI 4355).